The sequence spans 140 residues: Midkine (140 aa).

An N-terminal signal peptide occupies residues 1 to 22 (MQHRGFFLLALLALLVVTSAVA). Disulfide bonds link Cys-34–Cys-58, Cys-42–Cys-67, Cys-49–Cys-71, Cys-81–Cys-113, and Cys-91–Cys-123.

This sequence belongs to the pleiotrophin family. In terms of assembly, homodimer. Interacts with ALK. Interacts with LRP1; promotes neuronal survival. Interacts with LRP2. Interacts with NCAM1. Interacts (via C-terminal) with PTPRZ1 (via chondroitin sulfate chains); this interaction is inhibited by PTN; this interaction promotes neuronal migration. Interacts with NCL; this interaction promotes NCL clustering and lateral movements of this complex into lipid rafts leading to MDK internalization. Interacts with LRP6 and LRP8: this interaction is calcium dependent. Interacts with ITGA4. Interacts with ITGA6. Interacts with ITGB1. Interacts with ITGA4:ITGB1 complex; this interaction mediates MDK-induced osteoblast cells migration through PXN phosphorylation. Interacts with ITGA6:ITGB1 complex; this interaction mediates MDK-induced neurite outgrowth. Interacts with NOTCH2; this interactio mediates a nuclear accumulation of NOTCH2 and therefore activation of NOTCH2 signaling leading to interaction between HES1 and STAT3. Interacts with GPC2 (via heparan sulfate chain); this interaction is inhibited by heparin followed by chondroitin sulfate E; this interaction induces GPC2 clustering through heparan sulfate chain; this interaction induces neuronal cell adhesion and neurite outgrowth. Interacts with SDC3; this interaction induces SDC3 clustering; this interaction induces neuronal cell adhesion and neurite outgrowth. Interacts with SDC1. Interacts with CSPG5; this interaction promotes elongation of oligodendroglial precursor-like cells. As to expression, expressed in the follicular epithelium and granulosa cells of the ovary.

It localises to the secreted. In terms of biological role, secreted protein that functions as a cytokine and growth factor and mediates its signal through cell-surface proteoglycan and non-proteoglycan receptors. Binds cell-surface proteoglycan receptors via their chondroitin sulfate (CS) groups. Thereby regulates many processes like inflammatory response, cell proliferation, cell adhesion, cell growth, cell survival, tissue regeneration, cell differentiation and cell migration. Participates in inflammatory processes by exerting two different activities. Firstly, mediates neutrophils and macrophages recruitment to the sites of inflammation both by direct action by cooperating namely with ITGB2 via LRP1 and by inducing chemokine expression. This inflammation can be accompanied by epithelial cell survival and smooth muscle cell migration after renal and vessel damage, respectively. Secondly, suppresses the development of tolerogenic dendric cells thereby inhibiting the differentiation of regulatory T cells and also promote T cell expansion through NFAT signaling and Th1 cell differentiation. Promotes tissue regeneration after injury or trauma. After heart damage negatively regulates the recruitment of inflammatory cells and mediates cell survival through activation of anti-apoptotic signaling pathways via MAPKs and AKT pathways through the activation of angiogenesis. Also facilitates liver regeneration as well as bone repair by recruiting macrophage at trauma site and by promoting cartilage development by facilitating chondrocyte differentiation. Plays a role in brain by promoting neural precursor cells survival and growth through interaction with heparan sulfate proteoglycans. Binds PTPRZ1 and promotes neuronal migration and embryonic neurons survival. Binds SDC3 or GPC2 and mediates neurite outgrowth and cell adhesion. Binds chondroitin sulfate E and heparin leading to inhibition of neuronal cell adhesion induced by binding with GPC2. Binds CSPG5 and promotes elongation of oligodendroglial precursor-like cells. Also binds ITGA6:ITGB1 complex; this interaction mediates MDK-induced neurite outgrowth. Binds LRP1; promotes neuronal survival. Binds ITGA4:ITGB1 complex; this interaction mediates MDK-induced osteoblast cells migration through PXN phosphorylation. Binds anaplastic lymphoma kinase (ALK) which induces ALK activation and subsequent phosphorylation of the insulin receptor substrate (IRS1), followed by the activation of mitogen-activated protein kinase (MAPK) and PI3-kinase, and the induction of cell proliferation. Promotes epithelial to mesenchymal transition through interaction with NOTCH2. During arteriogenesis, plays a role in vascular endothelial cell proliferation by inducing VEGFA expression and release which in turn induces nitric oxide synthase expression. Moreover activates vasodilation through nitric oxide synthase activation. Negatively regulates bone formation in response to mechanical load by inhibiting Wnt/beta-catenin signaling in osteoblasts. In addition plays a role in hippocampal development, working memory, auditory response, early fetal adrenal gland development and the female reproductive system. This is Midkine from Mus musculus (Mouse).